The following is a 500-amino-acid chain: NAD(P)H-quinone oxidoreductase chain 4, chloroplastic (500 aa).

14 consecutive transmembrane segments (helical) span residues 4 to 24 (FPWLTIIVVLPISAGSSIGFL), 37 to 57 (ICICILELLLTTYAFCYHFQL), 87 to 107 (MGPVLLTGFITTLATLAAWPV), 113 to 130 (LFHFLMLAMYSGQIGSFS), 134 to 154 (LLLFFMMWELELIPIYLLLSL), 167 to 187 (FILYTAGGSIFLLMGVSGMGL), 208 to 228 (ALEIIFYIGFFIAYAAKSPII), 242 to 262 (HYSTCMLLAGILLKMGAYGLV), 272 to 292 (AHSIFSPWLMIIGAIQIIYAA), 305 to 325 (IAYSSVSHMGFITIGIGSITD), 330 to 350 (GSILQIISHGFIGAALFFLAG), 386 to 406 (LALPGMSGFVAESVVFLGIIT), 416 to 436 (ILITFVMAIGMILTPIYSLSM), and 462 to 482 (LFILICILLPVIGIGIYPDFV).

It belongs to the complex I subunit 4 family.

The protein resides in the plastid. It is found in the chloroplast thylakoid membrane. The enzyme catalyses a plastoquinone + NADH + (n+1) H(+)(in) = a plastoquinol + NAD(+) + n H(+)(out). The catalysed reaction is a plastoquinone + NADPH + (n+1) H(+)(in) = a plastoquinol + NADP(+) + n H(+)(out). This is NAD(P)H-quinone oxidoreductase chain 4, chloroplastic from Illicium oligandrum (Star anise).